A 60-amino-acid chain; its full sequence is Large ribosomal subunit protein bL32 (60 aa).

A disordered region spans residues 1–60; the sequence is MAVQQNKKSPSKRGMHRSHNALTVPGIAVESTTGETHLRHHISPTGFYRGRKVLKTKSEA. Basic residues-rich tracts occupy residues 9–19 and 49–60; these read SPSKRGMHRSH and RGRKVLKTKSEA.

It belongs to the bacterial ribosomal protein bL32 family.

The protein is Large ribosomal subunit protein bL32 of Polaromonas sp. (strain JS666 / ATCC BAA-500).